Consider the following 560-residue polypeptide: Light-independent protochlorophyllide reductase subunit N (560 aa).

[4Fe-4S] cluster is bound by residues Cys24, Cys49, and Cys109. Residues 173 to 182 are compositionally biased toward low complexity; the sequence is NSLFNQSSNS. Residues 173 to 210 are disordered; that stretch reads NSLFNQSSNSPENLKTLNTKKDTFQNSTENSKTFSAEK. A compositionally biased stretch (polar residues) spans 196 to 206; that stretch reads FQNSTENSKTF.

Belongs to the BchN/ChlN family. As to quaternary structure, protochlorophyllide reductase is composed of three subunits; ChlL, ChlN and ChlB. Forms a heterotetramer of two ChlB and two ChlN subunits. It depends on [4Fe-4S] cluster as a cofactor.

It is found in the plastid. Its subcellular location is the chloroplast. The enzyme catalyses chlorophyllide a + oxidized 2[4Fe-4S]-[ferredoxin] + 2 ADP + 2 phosphate = protochlorophyllide a + reduced 2[4Fe-4S]-[ferredoxin] + 2 ATP + 2 H2O. It participates in porphyrin-containing compound metabolism; chlorophyll biosynthesis (light-independent). In terms of biological role, component of the dark-operative protochlorophyllide reductase (DPOR) that uses Mg-ATP and reduced ferredoxin to reduce ring D of protochlorophyllide (Pchlide) to form chlorophyllide a (Chlide). This reaction is light-independent. The NB-protein (ChlN-ChlB) is the catalytic component of the complex. The polypeptide is Light-independent protochlorophyllide reductase subunit N (Tetradesmus obliquus (Green alga)).